The following is a 123-amino-acid chain: Small ribosomal subunit protein uS12 (123 aa).

The disordered stretch occupies residues 1–27; the sequence is MPTIQQLIRKPRQPKIKRSKSMHLQEC. Basic residues predominate over residues 9–21; sequence RKPRQPKIKRSKS. Aspartate 89 carries the 3-methylthioaspartic acid modification.

The protein belongs to the universal ribosomal protein uS12 family. In terms of assembly, part of the 30S ribosomal subunit. Contacts proteins S8 and S17. May interact with IF1 in the 30S initiation complex.

Its function is as follows. With S4 and S5 plays an important role in translational accuracy. In terms of biological role, interacts with and stabilizes bases of the 16S rRNA that are involved in tRNA selection in the A site and with the mRNA backbone. Located at the interface of the 30S and 50S subunits, it traverses the body of the 30S subunit contacting proteins on the other side and probably holding the rRNA structure together. The combined cluster of proteins S8, S12 and S17 appears to hold together the shoulder and platform of the 30S subunit. The chain is Small ribosomal subunit protein uS12 from Roseobacter denitrificans (strain ATCC 33942 / OCh 114) (Erythrobacter sp. (strain OCh 114)).